Here is a 198-residue protein sequence, read N- to C-terminus: DnaJ homolog subfamily C member 5 (198 aa).

S8, S10, S12, and S15 each carry phosphoserine. A J domain is found at 13–82 (GESLYHVLGL…RNIYDKYGSL (70 aa)). Residue Y17 is modified to Phosphotyrosine. Residue K56 is modified to N6-acetyllysine. At S151 the chain carries Phosphoserine.

Oligomers. Homodimer. Interacts with the chaperone complex consisting of HSC70 and SGTA. Interacts with ZDHHC13 (via ANK repeats). Interacts with ZDHHC17 (via ANK repeats). Interacts with SYT1, SYT5 and SYT7, and with SYT9, forming a complex with SNAP25. Ser-10 phosphorylation induces an order-to-disorder transition triggering the interaction with Lys-58. This conformational switch modulates DNAJC5's cellular functions by reducing binding to syntaxin and synaptogamin without altering HSC70 interactions. In terms of processing, palmitoylated. Could be palmitoylated by DHHC3, DHHC7, DHHC15 and DHHC17. Palmitoylation occurs probably in the cysteine-rich domain and regulates DNAJC5 membrane attachment. In terms of tissue distribution, expressed in pancreas, kidney, skeletal muscle, liver, lung, placenta, brain and heart.

The protein resides in the cytoplasm. Its subcellular location is the cytosol. The protein localises to the membrane. It localises to the cytoplasmic vesicle. It is found in the secretory vesicle. The protein resides in the chromaffin granule membrane. Its subcellular location is the melanosome. The protein localises to the cell membrane. Acts as a general chaperone in regulated exocytosis. Acts as a co-chaperone for the SNARE protein SNAP-25. Involved in the calcium-mediated control of a late stage of exocytosis. May have an important role in presynaptic function. May be involved in calcium-dependent neurotransmitter release at nerve endings. This is DnaJ homolog subfamily C member 5 from Homo sapiens (Human).